Reading from the N-terminus, the 270-residue chain is tRNA pseudouridine synthase A (270 aa).

The Nucleophile role is filled by D60. The segment at 107–111 is RNA binding; that stretch reads FHARF. Y118 provides a ligand contact to substrate. The interaction with tRNA stretch occupies residues 168-172; it reads QCQSR.

The protein belongs to the tRNA pseudouridine synthase TruA family. In terms of assembly, homodimer.

It carries out the reaction uridine(38/39/40) in tRNA = pseudouridine(38/39/40) in tRNA. Its function is as follows. Formation of pseudouridine at positions 38, 39 and 40 in the anticodon stem and loop of transfer RNAs. The protein is tRNA pseudouridine synthase A of Escherichia coli O9:H4 (strain HS).